The chain runs to 393 residues: Actin-related protein 2 (393 aa).

ATP is bound by residues 158-160, 212-216, and 303-308; these read GDG, RQMKE, and GGTTMY.

The protein belongs to the actin family. ARP2 subfamily. In terms of assembly, component of the Arp2/3 complex.

It localises to the cytoplasm. Its subcellular location is the cytoskeleton. Its function is as follows. Functions as ATP-binding component of the Arp2/3 complex which is involved in regulation of actin polymerization and together with an activating nucleation-promoting factor (NPF) mediates the formation of branched actin networks. Seems to contact the pointed end of the daughter actin filament. This Caenorhabditis briggsae protein is Actin-related protein 2 (arx-2).